Reading from the N-terminus, the 461-residue chain is Glycine--tRNA ligase (461 aa).

The substrate site is built by Arg-100 and Glu-163. ATP is bound by residues 195–197, 205–210, 282–283, and 326–329; these read RNE, FRTREF, EL, and GLGR. Substrate is bound at residue 210–214; that stretch reads FEQME. 322 to 326 provides a ligand contact to substrate; that stretch reads EPAAG.

Belongs to the class-II aminoacyl-tRNA synthetase family. Homodimer.

Its subcellular location is the cytoplasm. The catalysed reaction is tRNA(Gly) + glycine + ATP = glycyl-tRNA(Gly) + AMP + diphosphate. Functionally, catalyzes the attachment of glycine to tRNA(Gly). This Corynebacterium efficiens (strain DSM 44549 / YS-314 / AJ 12310 / JCM 11189 / NBRC 100395) protein is Glycine--tRNA ligase.